The following is a 412-amino-acid chain: Double C2-like domain-containing protein beta (412 aa).

The negatively regulates targeting to plasma membrane stretch occupies residues 1–36; that stretch reads MTLRRRGEKATISIQEHMAIDVCPGPIRPIKQISDY. Residues 1-90 form a mediates interaction with DYNLT1 region; it reads MTLRRRGEKA…EDVDQLFGAY (90 aa). Positions 38–123 are disordered; it reads PRFPRGLPPT…PDADGYESDD (86 aa). Over residues 49–73 the composition is skewed to low complexity; sequence APRASAPPDAPARSPAATAGPRSPS. The span at 95-108 shows a compositional bias: pro residues; the sequence is GPSPGPSPVRPPAK. Positions 112 to 123 are enriched in acidic residues; it reads DEPDADGYESDD. C2 domains follow at residues 126–250 and 266–399; these read ALGT…SICL and ERGR…ERWH. Residues aspartate 157, aspartate 163, aspartate 218, aspartate 220, aspartate 297, aspartate 303, aspartate 357, aspartate 359, and aspartate 365 each coordinate Ca(2+). Residues 257–375 are mediates interaction with STXBP3; that stretch reads DKAEDKSLEE…FIGGVVLGIN (119 aa). A Phosphoserine modification is found at serine 411.

Interacts with STX4; the interaction is calcium-dependent, increased by insulin and glucose, and mediates vesicle fusion with plasma membrane in pancreatic cells and adipocytes. Interacts with STXBP3; the interaction is direct, occurs at the cell membrane and regulates glucose-stimulated insulin secretion. Interacts with cytoplasmic dynein light chain DYNLT1. Interacts with the SNARE (soluble N-ethylmaleimide-sensitive factor attached protein receptor) complex composed of SNAP25, STX1A and VAMP2; the interaction is calcium-dependent and competitive with SYT1. May interact with UNC13A; the interaction mediates targeting to the plasma membrane. Ca(2+) serves as cofactor. Expressed in brain; highly enriched in neurons.

The protein resides in the cytoplasm. The protein localises to the cytoplasmic granule. It is found in the cell membrane. Calcium sensor which positively regulates SNARE-dependent fusion of vesicles with membranes. Binds phospholipids in a calcium-dependent manner and may act at the priming stage of fusion by modifying membrane curvature to stimulate fusion. Involved in calcium-triggered exocytosis in chromaffin cells and calcium-dependent spontaneous release of neurotransmitter in absence of action potentials in neuronal cells. Involved both in glucose-stimulated insulin secretion in pancreatic cells and insulin-dependent GLUT4 transport to the plasma membrane in adipocytes. In Rattus norvegicus (Rat), this protein is Double C2-like domain-containing protein beta (Doc2b).